Reading from the N-terminus, the 332-residue chain is 2-oxoglutarate-dependent dioxygenase FG08081 (332 aa).

The Fe2OG dioxygenase domain maps to 176 to 280 (RSKSTLYFLH…RYSISYFLRA (105 aa)). Fe cation is bound by residues histidine 201, aspartate 203, and histidine 258. Residue arginine 271 coordinates 2-oxoglutarate.

It belongs to the iron/ascorbate-dependent oxidoreductase family. The cofactor is Fe(2+).

It functions in the pathway mycotoxin biosynthesis. 2-oxoglutarate-dependent dioxygenase; part of the gene cluster that mediates the biosynthesis of butenolide, a mycotoxin that shows antibiotic activity but does not seem to play a major role in the spread of head blight in wheat. Butenolide is derived from glutamic acid via a 4-acetamido-2-butenoic acid intermediate. The predicted function of the NADH:flavin oxidoreductase FG08077, the cytochrome P450 monooxygenase FG08079, the decarboxylase FG08083, and the putative acetyltransferase FG08082 are consistent with this pathway, however, the respective activities of the butelonide biosynthesis cluster enzymes have still to be experimentally determined. The protein is 2-oxoglutarate-dependent dioxygenase FG08081 of Gibberella zeae (strain ATCC MYA-4620 / CBS 123657 / FGSC 9075 / NRRL 31084 / PH-1) (Wheat head blight fungus).